Here is a 359-residue protein sequence, read N- to C-terminus: Peptide chain release factor 1 (359 aa).

Gln-233 carries the N5-methylglutamine modification.

Belongs to the prokaryotic/mitochondrial release factor family. Post-translationally, methylated by PrmC. Methylation increases the termination efficiency of RF1.

It is found in the cytoplasm. In terms of biological role, peptide chain release factor 1 directs the termination of translation in response to the peptide chain termination codons UAG and UAA. In Cytophaga hutchinsonii (strain ATCC 33406 / DSM 1761 / CIP 103989 / NBRC 15051 / NCIMB 9469 / D465), this protein is Peptide chain release factor 1.